Consider the following 288-residue polypeptide: Sulfur carrier protein FdhD (288 aa).

The Cysteine persulfide intermediate role is filled by Cys-122. 268–273 (FVRGER) serves as a coordination point for Mo-bis(molybdopterin guanine dinucleotide).

It belongs to the FdhD family.

The protein localises to the cytoplasm. Required for formate dehydrogenase (FDH) activity. Acts as a sulfur carrier protein that transfers sulfur from IscS to the molybdenum cofactor prior to its insertion into FDH. This Anaeromyxobacter dehalogenans (strain 2CP-1 / ATCC BAA-258) protein is Sulfur carrier protein FdhD.